We begin with the raw amino-acid sequence, 456 residues long: Iroquois-class homeodomain protein irx-2 (456 aa).

Positions 110 to 172 (DPAYRKNATR…NARRRLKKEN (63 aa)) form a DNA-binding region, homeobox; TALE-type. Disordered stretches follow at residues 172 to 214 (NKMT…AEDE), 246 to 320 (CESG…PASK), and 434 to 456 (RPTN…QPYP). 2 stretches are compositionally biased toward basic and acidic residues: residues 192–205 (GERV…KAQD) and 246–256 (CESGSESKEKY). The segment covering 257–269 (DDDEDEEEGDEED) has biased composition (acidic residues). Positions 291–318 (NHQQDGSPRNSNKTSLDNGMSPSSQTPA) are enriched in polar residues.

The protein belongs to the TALE/IRO homeobox family. In terms of tissue distribution, expressed in the neural plate in overlapping patterns with other irx members, which all share an anterior border of expression. Also expressed in the placodes. Broadly expressed in the tailbud rhombencephalon (hindbrain). Outside the nervous system and at tailbud stages, expressed in the developing otic vesicle, branchial arches, prospective heart region and pronephros.

It localises to the nucleus. In terms of biological role, acts partially redundantly with other irx members in neural patterning. Required for formation of the posterior forebrain, midbrain, hindbrain, and to a lesser extent, spinal cord. Acts early in neural plate development to induce expression of some but not all proneural genes, and specify a neural precursor state. Also up-regulates repressors that prevent neuronal differentiation. Patterns the neuroectoderm in both the anterior/posterior and dorsal/ventral axes. Probably dispensable for pronephric kidney development. This is Iroquois-class homeodomain protein irx-2 from Xenopus tropicalis (Western clawed frog).